A 181-amino-acid polypeptide reads, in one-letter code: Large ribosomal subunit protein uL10 (181 aa).

The protein belongs to the universal ribosomal protein uL10 family. In terms of assembly, part of the ribosomal stalk of the 50S ribosomal subunit. The N-terminus interacts with L11 and the large rRNA to form the base of the stalk. The C-terminus forms an elongated spine to which L12 dimers bind in a sequential fashion forming a multimeric L10(L12)X complex.

Its function is as follows. Forms part of the ribosomal stalk, playing a central role in the interaction of the ribosome with GTP-bound translation factors. The chain is Large ribosomal subunit protein uL10 from Amoebophilus asiaticus (strain 5a2).